Consider the following 314-residue polypeptide: E3 ubiquitin-protein ligase SINA-like 11 (314 aa).

Positions 1–12 (MEDSNSHPQNQT) are enriched in polar residues. A disordered region spans residues 1-31 (MEDSNSHPQNQTSKRKSSHPQKKQRMENETR). Residues 13–23 (SKRKSSHPQKK) show a composition bias toward basic residues. An RING-type; degenerate zinc finger spans residues 43 to 81 (CPVCFEPLTIPTFQCDDGHIVCNFCFAKVSNKCPGPGCD). Positions 95 to 280 (VLESAFVPCQ…PANEVQQVTI (186 aa)) are SBD. The segment at 98–156 (SAFVPCQNTEFGCTKSVSYEKVSSHEKECNYSQCSCPNLECNYTGSYNIIYGHFMRRHL) adopts an SIAH-type zinc-finger fold. Zn(2+) contacts are provided by Cys103, Cys110, His122, Cys126, Cys133, Cys138, His150, and His155.

It belongs to the SINA (Seven in absentia) family.

It catalyses the reaction S-ubiquitinyl-[E2 ubiquitin-conjugating enzyme]-L-cysteine + [acceptor protein]-L-lysine = [E2 ubiquitin-conjugating enzyme]-L-cysteine + N(6)-ubiquitinyl-[acceptor protein]-L-lysine.. It functions in the pathway protein modification; protein ubiquitination. In terms of biological role, E3 ubiquitin-protein ligase that mediates ubiquitination and subsequent proteasomal degradation of target proteins. E3 ubiquitin ligases accept ubiquitin from an E2 ubiquitin-conjugating enzyme in the form of a thioester and then directly transfers the ubiquitin to targeted substrates. It probably triggers the ubiquitin-mediated degradation of different substrates. The chain is E3 ubiquitin-protein ligase SINA-like 11 from Arabidopsis thaliana (Mouse-ear cress).